The following is a 194-amino-acid chain: Holliday junction branch migration complex subunit RuvA (194 aa).

The interval 1–63 (MFEYLYGTVE…EDTYKLIGFL (63 aa)) is domain I. Residues 64-142 (DERDRKIFEL…NLTYTEEETV (79 aa)) form a domain II region. Residues 143–147 (SMDML) are flexible linker. Residues 147–194 (LEDLVLALEGLGYNKKEIDKTLEKIDLNKFSSLEDAIKGILKNMRIGD) form a domain III region.

The protein belongs to the RuvA family. As to quaternary structure, homotetramer. Forms an RuvA(8)-RuvB(12)-Holliday junction (HJ) complex. HJ DNA is sandwiched between 2 RuvA tetramers; dsDNA enters through RuvA and exits via RuvB. An RuvB hexamer assembles on each DNA strand where it exits the tetramer. Each RuvB hexamer is contacted by two RuvA subunits (via domain III) on 2 adjacent RuvB subunits; this complex drives branch migration. In the full resolvosome a probable DNA-RuvA(4)-RuvB(12)-RuvC(2) complex forms which resolves the HJ.

The protein localises to the cytoplasm. In terms of biological role, the RuvA-RuvB-RuvC complex processes Holliday junction (HJ) DNA during genetic recombination and DNA repair, while the RuvA-RuvB complex plays an important role in the rescue of blocked DNA replication forks via replication fork reversal (RFR). RuvA specifically binds to HJ cruciform DNA, conferring on it an open structure. The RuvB hexamer acts as an ATP-dependent pump, pulling dsDNA into and through the RuvAB complex. HJ branch migration allows RuvC to scan DNA until it finds its consensus sequence, where it cleaves and resolves the cruciform DNA. The chain is Holliday junction branch migration complex subunit RuvA from Fusobacterium nucleatum subsp. nucleatum (strain ATCC 25586 / DSM 15643 / BCRC 10681 / CIP 101130 / JCM 8532 / KCTC 2640 / LMG 13131 / VPI 4355).